The following is a 95-amino-acid chain: Small ribosomal subunit protein uS17 (95 aa).

It belongs to the universal ribosomal protein uS17 family. As to quaternary structure, part of the 30S ribosomal subunit.

Its function is as follows. One of the primary rRNA binding proteins, it binds specifically to the 5'-end of 16S ribosomal RNA. The polypeptide is Small ribosomal subunit protein uS17 (Mesomycoplasma hyopneumoniae (strain 7448) (Mycoplasma hyopneumoniae)).